A 764-amino-acid chain; its full sequence is Nucleolar transcription factor 1 (764 aa).

Met1 is modified (N-acetylmethionine). The interval 1–21 (MNGEADCPTDLEMAAPKGQDR) is disordered. 2 DNA-binding regions (HMG box) span residues 112–180 (PKKP…ARFR) and 196–264 (PEKP…RDYI). Residue Thr201 is modified to Phosphothreonine. Ser273, Ser336, and Ser364 each carry phosphoserine. The segment at residues 298–362 (TKPPPNSYSL…DYEVELLRFL (65 aa)) is a DNA-binding region (HMG box 3). Over residues 370–379 (QQRVLGEEKM) the composition is skewed to basic and acidic residues. The tract at residues 370 to 411 (QQRVLGEEKMLNINKKQTTSPASKKPSQEGGKGGSEKPKRPV) is disordered. A phosphoserine mark is found at Ser389, Ser412, Ser433, Ser435, Ser484, Ser495, Ser546, Ser584, and Ser638. 3 DNA-binding regions (HMG box) span residues 407–475 (PKRP…GGER), 482–549 (PESP…SEMR), and 568–634 (KKPP…DLWV). A disordered region spans residues 456–488 (YKAREAALKAQSERKPGGEREDRGKLPESPKRA). Residues 457-488 (KAREAALKAQSERKPGGEREDRGKLPESPKRA) show a composition bias toward basic and acidic residues. The disordered stretch occupies residues 546-576 (SEMRAPPAATNSSKKMKFQGEPKKPPMNGYQ). The segment at 648–764 (YISNKRKNMT…SGDSSDSDSN (117 aa)) is disordered. A compositionally biased stretch (polar residues) spans 664–674 (PKSSRTTLQSK). A compositionally biased stretch (acidic residues) spans 677 to 745 (SEEDDDEEDD…DDDEDEDNES (69 aa)). Low complexity predominate over residues 746–758 (EGSSSSSSSSGDS).

As to quaternary structure, homodimer. Part of Pol I pre-initiation complex (PIC), in which Pol I core assembles with RRN3 and promoter-bound UTBF and SL1/TIF-IB complex. Interacts with TOP2A in the context of Pol I complex. Interacts with TBP. Interacts with TAF1A. Interacts with PHF6. Interacts with CEBPA (isoform 1 and isoform 4). Interacts with DDX11. Interacts with NOP53. Interacts with RASL11A. Interacts with DHX33. Binds to IRS1 and PIK3CA. Interacts with ALKBH2. Phosphorylated and activated by PIK3CA.

The protein localises to the nucleus. It is found in the nucleolus. In terms of biological role, recognizes the ribosomal RNA gene promoter and activates transcription mediated by RNA polymerase I through cooperative interactions with the transcription factor SL1/TIF-IB complex. It binds specifically to the upstream control element. This chain is Nucleolar transcription factor 1 (Ubtf), found in Rattus norvegicus (Rat).